We begin with the raw amino-acid sequence, 226 residues long: Ribonuclease 3 (226 aa).

The RNase III domain occupies 6 to 128 (INRLQRKLGY…LIGGVFLDSN (123 aa)). E41 is a Mg(2+) binding site. Residue D45 is part of the active site. Positions 114 and 117 each coordinate Mg(2+). E117 is a catalytic residue. The DRBM domain maps to 155-225 (DPKTRLQEYL…AEQVLKKLEL (71 aa)).

The protein belongs to the ribonuclease III family. Homodimer. Requires Mg(2+) as cofactor.

The protein resides in the cytoplasm. The catalysed reaction is Endonucleolytic cleavage to 5'-phosphomonoester.. Functionally, digests double-stranded RNA. Involved in the processing of primary rRNA transcript to yield the immediate precursors to the large and small rRNAs (23S and 16S). Processes some mRNAs, and tRNAs when they are encoded in the rRNA operon. Processes pre-crRNA and tracrRNA of type II CRISPR loci if present in the organism. This is Ribonuclease 3 from Salmonella choleraesuis (strain SC-B67).